The sequence spans 293 residues: Extracellular metalloprotease PODANS_2_14170 (293 aa).

The first 18 residues, 1–18 (MRFSLALAAAGLAQTAFA), serve as a signal peptide directing secretion. Asn60 carries an N-linked (GlcNAc...) asparagine glycan. His206 is a Zn(2+) binding site. Glu207 is a catalytic residue. His210 contributes to the Zn(2+) binding site. Cys242 and Cys269 are disulfide-bonded.

Belongs to the peptidase M43B family.

It localises to the secreted. Secreted metalloproteinase that allows assimilation of proteinaceous substrates. The polypeptide is Extracellular metalloprotease PODANS_2_14170 (Podospora anserina (strain S / ATCC MYA-4624 / DSM 980 / FGSC 10383) (Pleurage anserina)).